Reading from the N-terminus, the 370-residue chain is Cobalt-precorrin-5B C(1)-methyltransferase (370 aa).

This sequence belongs to the CbiD family.

It carries out the reaction Co-precorrin-5B + S-adenosyl-L-methionine = Co-precorrin-6A + S-adenosyl-L-homocysteine. It functions in the pathway cofactor biosynthesis; adenosylcobalamin biosynthesis; cob(II)yrinate a,c-diamide from sirohydrochlorin (anaerobic route): step 6/10. In terms of biological role, catalyzes the methylation of C-1 in cobalt-precorrin-5B to form cobalt-precorrin-6A. The sequence is that of Cobalt-precorrin-5B C(1)-methyltransferase from Trichormus variabilis (strain ATCC 29413 / PCC 7937) (Anabaena variabilis).